Reading from the N-terminus, the 830-residue chain is Periplasmic nitrate reductase (830 aa).

Positions 1 to 32 form a signal peptide, tat-type signal; that stretch reads MELNRRDFMKANAAVAAAAAAGITIPVKNVHA. In terms of domain architecture, 4Fe-4S Mo/W bis-MGD-type spans 39 to 95; sequence IRWDKAPCRYCGTGCSVLVGTKDGRVVATQGDPDAEVNRGLNCIKGYFLSKIMYGAD. The [4Fe-4S] cluster site is built by C46, C49, C53, and C81. Mo-bis(molybdopterin guanine dinucleotide) is bound by residues K83, Q151, N176, C180, 213-220, 244-248, M374, Q378, N484, 510-511, K533, D560, and 720-729; these read WGSNMAEM, STFEH, SD, and TGRVLEHWHT. Residue F796 participates in substrate binding. Residues N804 and K821 each coordinate Mo-bis(molybdopterin guanine dinucleotide).

It belongs to the prokaryotic molybdopterin-containing oxidoreductase family. NasA/NapA/NarB subfamily. As to quaternary structure, component of the periplasmic nitrate reductase NapAB complex composed of NapA and NapB. Requires [4Fe-4S] cluster as cofactor. The cofactor is Mo-bis(molybdopterin guanine dinucleotide). Predicted to be exported by the Tat system. The position of the signal peptide cleavage has not been experimentally proven.

It localises to the periplasm. The catalysed reaction is 2 Fe(II)-[cytochrome] + nitrate + 2 H(+) = 2 Fe(III)-[cytochrome] + nitrite + H2O. Its function is as follows. Catalytic subunit of the periplasmic nitrate reductase complex NapAB. Receives electrons from NapB and catalyzes the reduction of nitrate to nitrite. This chain is Periplasmic nitrate reductase, found in Mannheimia succiniciproducens (strain KCTC 0769BP / MBEL55E).